The primary structure comprises 175 residues: Adenine phosphoribosyltransferase (175 aa).

This sequence belongs to the purine/pyrimidine phosphoribosyltransferase family. Homodimer.

The protein localises to the cytoplasm. It catalyses the reaction AMP + diphosphate = 5-phospho-alpha-D-ribose 1-diphosphate + adenine. It participates in purine metabolism; AMP biosynthesis via salvage pathway; AMP from adenine: step 1/1. Its function is as follows. Catalyzes a salvage reaction resulting in the formation of AMP, that is energically less costly than de novo synthesis. The protein is Adenine phosphoribosyltransferase of Parvibaculum lavamentivorans (strain DS-1 / DSM 13023 / NCIMB 13966).